A 750-amino-acid chain; its full sequence is Sulfhydryl oxidase 1 (750 aa).

The N-terminal stretch at 1 to 32 (MRRCGRHSGPPSLLLLLLLLPPLLLSVPGAYA) is a signal peptide. The Thioredoxin domain occupies 33–159 (ARLSVLYSSS…RMRLIDALES (127 aa)). Active-site nucleophile residues include Cys73 and Cys76. Disulfide bonds link Cys73–Cys76 and Cys104–Cys113. N-linked (GlcNAc...) asparagine glycosylation is found at Asn133 and Asn246. Cysteines 396 and 408 form a disulfide. Positions 399 to 506 (SEPHFRGFPC…EDPQFPKVQW (108 aa)) constitute an ERV/ALR sulfhydryl oxidase domain. FAD contacts are provided by residues Arg404, Trp411, His415, Asp454, His458, 481–488 (WTSHNRVN), Lys503, and Trp506. Residues Cys452 and Cys455 are joined by a disulfide bond. A disulfide bond links Cys512 and Cys515. Disordered stretches follow at residues 545–567 (VRDPPAPGPASRRGTQDPEASPN) and 585–632 (EQAA…PEHT). Positions 587–597 (AASAASPGATA) are enriched in low complexity. Residues 710–730 (FLDISLCVGLYSVSFMGLLAM) traverse the membrane as a helical segment.

It belongs to the quiescin-sulfhydryl oxidase (QSOX) family. Monomer. The cofactor is FAD. N-glycosylated. O-glycosylated on Thr and Ser residues. Isoform 3: Detected in seminal vesicle fluid (at protein level). Isoform 1: Detected in brain, hypophysis, heart, testis and the seminal vesicle. Isoform 3: Highly expressed in the seminal vesicles followed by testis, heart, brain, thymus, hypophysis and lung. Also expressed in prostate, kidney, spleen, liver.

Its subcellular location is the golgi apparatus membrane. It is found in the secreted. It catalyses the reaction 2 R'C(R)SH + O2 = R'C(R)S-S(R)CR' + H2O2. Functionally, catalyzes the oxidation of sulfhydryl groups in peptide and protein thiols to disulfides with the reduction of oxygen to hydrogen peroxide. Plays a role in disulfide bond formation in a variety of extracellular proteins. In fibroblasts, required for normal incorporation of laminin into the extracellular matrix, and thereby for normal cell-cell adhesion and cell migration. In Rattus norvegicus (Rat), this protein is Sulfhydryl oxidase 1 (Qsox1).